The following is a 407-amino-acid chain: Phosphopentomutase (407 aa).

Residues aspartate 10, aspartate 306, histidine 311, aspartate 347, histidine 348, and histidine 359 each contribute to the Mn(2+) site.

It belongs to the phosphopentomutase family. Mn(2+) serves as cofactor.

It localises to the cytoplasm. It carries out the reaction 2-deoxy-alpha-D-ribose 1-phosphate = 2-deoxy-D-ribose 5-phosphate. It catalyses the reaction alpha-D-ribose 1-phosphate = D-ribose 5-phosphate. It participates in carbohydrate degradation; 2-deoxy-D-ribose 1-phosphate degradation; D-glyceraldehyde 3-phosphate and acetaldehyde from 2-deoxy-alpha-D-ribose 1-phosphate: step 1/2. Its function is as follows. Isomerase that catalyzes the conversion of deoxy-ribose 1-phosphate (dRib-1-P) and ribose 1-phosphate (Rib-1-P) to deoxy-ribose 5-phosphate (dRib-5-P) and ribose 5-phosphate (Rib-5-P), respectively. The chain is Phosphopentomutase from Yersinia pseudotuberculosis serotype O:1b (strain IP 31758).